The primary structure comprises 87 residues: Small ribosomal subunit protein bS20 (87 aa).

Residues M1–S26 are disordered.

It belongs to the bacterial ribosomal protein bS20 family.

In terms of biological role, binds directly to 16S ribosomal RNA. This chain is Small ribosomal subunit protein bS20, found in Photorhabdus laumondii subsp. laumondii (strain DSM 15139 / CIP 105565 / TT01) (Photorhabdus luminescens subsp. laumondii).